The sequence spans 254 residues: Ornithine decarboxylase antizyme (254 aa).

This sequence belongs to the ODC antizyme family. As to quaternary structure, interacts with ODC1 and thereby sterically blocks ODC homodimerization.

Functionally, ornithine decarboxylase (ODC) antizyme protein that negatively regulates ODC activity and intracellular polyamine biosynthesis and uptake in response to increased intracellular polyamine levels. Binds to ODC monomers, inhibiting the assembly of the functional ODC homodimer, and targets the monomers for ubiquitin-independent proteolytic destruction by the 26S proteasome. Required for cellular differentiation in neuronal and myogenic lineages during embryonic development. The polypeptide is Ornithine decarboxylase antizyme (Oda) (Drosophila melanogaster (Fruit fly)).